The chain runs to 283 residues: Glutamate racemase (283 aa).

Residues 7–8 (DS) and 39–40 (YG) each bind substrate. The Proton donor/acceptor role is filled by cysteine 70. 71–72 (NT) contacts substrate. The active-site Proton donor/acceptor is cysteine 206. Residue 207–208 (TH) coordinates substrate.

Belongs to the aspartate/glutamate racemases family.

It carries out the reaction L-glutamate = D-glutamate. It participates in cell wall biogenesis; peptidoglycan biosynthesis. Provides the (R)-glutamate required for cell wall biosynthesis. This Phenylobacterium zucineum (strain HLK1) protein is Glutamate racemase.